A 181-amino-acid chain; its full sequence is RNA pyrophosphohydrolase (181 aa).

Residues 6–149 (GFRPNVGIIL…KRRVYTRALQ (144 aa)) enclose the Nudix hydrolase domain. Positions 38–59 (GGIKAQETPEEALFRELEEEVG) match the Nudix box motif. The segment at 159–181 (GLPRQPPVGRPRRSAPPRGCRRA) is disordered. Residues 168-181 (RPRRSAPPRGCRRA) are compositionally biased toward basic residues.

The protein belongs to the Nudix hydrolase family. RppH subfamily. Requires a divalent metal cation as cofactor.

Functionally, accelerates the degradation of transcripts by removing pyrophosphate from the 5'-end of triphosphorylated RNA, leading to a more labile monophosphorylated state that can stimulate subsequent ribonuclease cleavage. The protein is RNA pyrophosphohydrolase of Alkalilimnicola ehrlichii (strain ATCC BAA-1101 / DSM 17681 / MLHE-1).